A 379-amino-acid polypeptide reads, in one-letter code: Stimulator of interferon genes protein (379 aa).

The Cytoplasmic segment spans residues 1–23 (MPQDPSTRSSPARLLIPEPRAGR). The helical transmembrane segment at 24–40 (ARHAACVLLAVCFVVLF) threads the bilayer. Residues 41–50 (LSGEPLAPII) are Lumenal-facing. A helical membrane pass occupies residues 51-75 (RSVCTQLAALQLGVLLKGCCCLAEE). Residues 76-97 (IFHLHSRHHGSLWQVLCSCFPP) lie on the Cytoplasmic side of the membrane. The helical transmembrane segment at 98 to 111 (RWYLALLLVGGSAY) threads the bilayer. At 112–121 (LDPPEDNGHS) the chain is on the lumenal side. Residues 122–139 (PRLALTLSCLCQLLVLAL) traverse the membrane as a helical segment. At 140 to 379 (GLQKLSAVEV…LPQPLRSDCP (240 aa)) the chain is on the cytoplasmic side. Residues 158 to 345 (KNVAHGLAWS…WHLQQQQREE (188 aa)) are cyclic dinucleotide-binding domain (CBD). 3',3'-c-di-GMP contacts are provided by residues S167, Y172, 243-246 (RVYK), and S268. 2',3'-cGAMP is bound by residues 167-172 (SYYIGY), 243-246 (RVYK), and S268. The pLxIS motif signature appears at 363-366 (LQVS). Phosphoserine; by TBK1 is present on S366.

It belongs to the STING family. Homodimer; forms a homodimer in absence of cyclic nucleotide (c-di-GMP or cGAMP). Homotetramer; in presence of cyclic nucleotide (c-di-GMP or cGAMP), forms tetramers and higher-order oligomers through side-by-side packing. Interacts (when phosphorylated) with IRF3; following activation and phosphorylation on the pLxIS motif by TBK1, recruits IRF3. Phosphorylation by TBK1 leads to activation and production of IFN-beta. Following cyclic nucleotide (c-di-GMP or cGAMP)-binding, activation and translocation from the endoplasmic reticulum, STING1 is phosphorylated by TBK1 at Ser-366 in the pLxIS motif. The phosphorylated pLxIS motif constitutes an IRF3-binding motif, leading to recruitment of the transcription factor IRF3 to induce type-I interferons and other cytokines.

The protein localises to the endoplasmic reticulum membrane. Its subcellular location is the cytoplasm. It localises to the perinuclear region. The protein resides in the endoplasmic reticulum-Golgi intermediate compartment membrane. It is found in the golgi apparatus membrane. The protein localises to the cytoplasmic vesicle. Its subcellular location is the autophagosome membrane. The enzyme catalyses H(+)(in) = H(+)(out). Its function is as follows. Facilitator of innate immune signaling that acts as a sensor of cytosolic DNA from bacteria and viruses and promotes the production of type I interferon (IFN-alpha and IFN-beta). Innate immune response is triggered in response to non-CpG double-stranded DNA from viruses and bacteria delivered to the cytoplasm. Acts by binding cyclic dinucleotides: recognizes and binds cyclic di-GMP (c-di-GMP), a second messenger produced by bacteria, and cyclic GMP-AMP (cGAMP), a messenger produced by CGAS in response to DNA virus in the cytosol. Upon binding of c-di-GMP or cGAMP, STING1 oligomerizes and is able to activate both NF-kappa-B and IRF3 transcription pathways to induce expression of type I interferon and exert a potent anti-viral state. Exhibits 2',3' phosphodiester linkage-specific ligand recognition: can bind both 2'-3' linked cGAMP and 3'-3' linked cGAMP but is preferentially activated by 2'-3' linked cGAMP. In addition to promote the production of type I interferons, plays a direct role in autophagy. Following cGAMP-binding, STING1 buds from the endoplasmic reticulum into COPII vesicles, which then form the endoplasmic reticulum-Golgi intermediate compartment (ERGIC). The ERGIC serves as the membrane source for LC3 lipidation, leading to formation of autophagosomes that target cytosolic DNA or DNA viruses for degradation by the lysosome. Promotes autophagy by acting as a proton channel that directs proton efflux from the Golgi to facilitate LC3 lipidation. The autophagy- and interferon-inducing activities can be uncoupled and autophagy induction is independent of TBK1 phosphorylation. This is Stimulator of interferon genes protein from Gallus gallus (Chicken).